Here is a 418-residue protein sequence, read N- to C-terminus: MKIAIEGCMHGDLDNVYKTIQHYEQIHNTKVDLLLCCGDFQAVRNEKDMDSLNVPRKYREMKSFWKYYSGQEVAPIPTIFIGGNHEASNYLWELYYGGWAATNIYFLGFAGVVKFGNVRIGGLSGIYNERHYRSGHFERPPYNESTIRSVYHVRDYDVQKLMQLEEPLDIFLSHDWPVGITDYGDSESLMRQKPYFRQEIEEKTLGSKPAALLLEKLKPQYWFSAHLHCKFAAAVQHGNDGSVTKFLALDKCLPGKKFLQIIEIESEPGPFEVLYDEEWLAITRKFNSIFPLTRRYTNVSTAGTIQESREWVRKKLEERQFKPFEFARTVPAYNPSQRVFDSIPEIPQNPQTLSLLELLGLPYLLDSSPVTGERTDIPASLAPSDLPTYDSEEIPIDDIDEIEEMEEAKADDHTRDDA.

4 residues coordinate a divalent metal cation: C8, H10, D39, and N84. The interval 124–154 is lariat recognition loop; it reads SGIYNERHYRSGHFERPPYNESTIRSVYHVR. A divalent metal cation-binding residues include H174, H226, and H228. The interval 372 to 418 is disordered; that stretch reads GERTDIPASLAPSDLPTYDSEEIPIDDIDEIEEMEEAKADDHTRDDA. Acidic residues predominate over residues 390–406; sequence DSEEIPIDDIDEIEEME. The span at 407–418 shows a compositional bias: basic and acidic residues; that stretch reads EAKADDHTRDDA.

This sequence belongs to the lariat debranching enzyme family. It depends on Fe(2+) as a cofactor. Zn(2+) is required as a cofactor. Requires Mn(2+) as cofactor. In terms of tissue distribution, widely expressed. Expressed in roots, stems, cauline and rosette leaves, flower buds and siliques.

It is found in the nucleus. With respect to regulation, active in presence of diverse metals including Fe(2+), Zn(2+), Mn(2+). Binds two metal cations in two adjacent alpha and beta metal-binding pockets. Its function is as follows. Cleaves the 2'-5' phosphodiester linkage at the branch point of lariat intron pre-mRNAs after splicing and converts them into linear molecules that are subsequently degraded. It thereby facilitates ribonucleotide turnover. It may also participate in retrovirus replication via an RNA lariat intermediate in cDNA synthesis. Plays en essential role during embryogenesis. The sequence is that of Lariat debranching enzyme (DBR1) from Arabidopsis thaliana (Mouse-ear cress).